The sequence spans 442 residues: uncharacterized protein (442 aa).

The signal sequence occupies residues 1–23; the sequence is MEILLIVLGAVVAGLLCPVQTAA. Disordered regions lie at residues 36 to 67 and 91 to 115; these read TSIS…NSSD and ANET…TNTR. Low complexity predominate over residues 48-67; it reads TSSGELSQSTFSSSSTNSSD. N64, N92, N99, N130, N174, N225, N244, N346, N363, N386, and N398 each carry an N-linked (GlcNAc...) asparagine glycan.

The protein localises to the secreted. This is an uncharacterized protein from Arthroderma benhamiae (strain ATCC MYA-4681 / CBS 112371) (Trichophyton mentagrophytes).